A 213-amino-acid chain; its full sequence is N-(5'-phosphoribosyl)anthranilate isomerase (213 aa).

Belongs to the TrpF family.

The enzyme catalyses N-(5-phospho-beta-D-ribosyl)anthranilate = 1-(2-carboxyphenylamino)-1-deoxy-D-ribulose 5-phosphate. It participates in amino-acid biosynthesis; L-tryptophan biosynthesis; L-tryptophan from chorismate: step 3/5. In Rhodopseudomonas palustris (strain TIE-1), this protein is N-(5'-phosphoribosyl)anthranilate isomerase.